The sequence spans 188 residues: Guanylate kinase (188 aa).

Residues 4 to 183 enclose the Guanylate kinase-like domain; it reads RNIVVLTAPS…AVEETLTRIR (180 aa). An ATP-binding site is contributed by 11–18; sequence APSGAGKT.

The protein belongs to the guanylate kinase family.

Its subcellular location is the cytoplasm. The catalysed reaction is GMP + ATP = GDP + ADP. Functionally, essential for recycling GMP and indirectly, cGMP. The protein is Guanylate kinase of Salinibacter ruber (strain DSM 13855 / M31).